The sequence spans 806 residues: MFVSYRWLQEYVDIKDVTAQELADKITKSGIEVEGVEVLNKGVKGVVVGHVLECEKHPEADKLSKCLIDIGEEEPVQIICGAANIAKGLKVPVAKVGAVLPGNFKIKKAKLRGEASHGMVCALQELGIDGKLVSKEYADGIFIFPSDAEVGADALEILNLHDEVLELGLTPNRADCLNMLGVAYEVAAIYGREVKLPAIDLQETAEKTSDYISVSVEAKEENPLYIAKMVKNVKIGPSPMWMQTRLMAAGIRPISNVVDITNYILMEYGQPLHAFDYDKLGSKEIVVRLAKEGEKIETLDDQERTLQSHHLVITNGTKALAVAGVMGGADSEVTNETVNVLIESAYFAGQTVRRTSKDLGLRSESSARFEKGIDPTRTFEAIQHAAALMAKYAGGEALEGVVEADNLQVQERTVSVTAEKVNRVLGTNISASEMGTMFTNLKFPFTEVEGTFHVNVPARRPDITISEDLVEEVGRLYGYDHIPVTLPSGTMTRGKLTAAQTKRRKVRRFLEGAGLYEAITYSLTSADKAKQYMVEPNEKAPVNLALPMSEERSQLRLSLVPQLLEAVSYNVARKNDSVALYEVGSIFLPTEAGELPKEEQHLAGVMTGLALHHAWQGEKKVVDFFVVKGVLEGLFDVLGVSNQITYAPAKREGMHPGRTADIVLDGEVIGFIGQLHPEAEKQLDVKNTFVFELSLVKVFGTDAEETYYSAIPRFPSMTRDMAVVVTKETKAGEMKQVIAEAGGELLKDVTLFDLYEGEKMEEGKKSLAFSMNYFDPERTLTDEEVTEAHNRVLTAVEEKFGAELRK.

One can recognise a tRNA-binding domain in the interval 40 to 155; sequence NKGVKGVVVG…SDAEVGADAL (116 aa). In terms of domain architecture, B5 spans 409-484; the sequence is VQERTVSVTA…RLYGYDHIPV (76 aa). Residues Asp462, Asp468, Glu471, and Glu472 each contribute to the Mg(2+) site. The FDX-ACB domain maps to 712–805; it reads PRFPSMTRDM…VEEKFGAELR (94 aa).

It belongs to the phenylalanyl-tRNA synthetase beta subunit family. Type 1 subfamily. In terms of assembly, tetramer of two alpha and two beta subunits. Mg(2+) serves as cofactor.

It is found in the cytoplasm. The enzyme catalyses tRNA(Phe) + L-phenylalanine + ATP = L-phenylalanyl-tRNA(Phe) + AMP + diphosphate + H(+). This chain is Phenylalanine--tRNA ligase beta subunit, found in Bacillus thuringiensis subsp. konkukian (strain 97-27).